The primary structure comprises 1857 residues: U3 small nucleolar RNA-associated protein 10 (1857 aa).

Residues 267–287 (LTAYSIISVLSSLVPLSADLV) form a helical membrane-spanning segment. One copy of the HEAT repeat lies at 1817–1855 (LIPYIAELLEDDDEEVELEVRNGLVRVIENVLGEPLDRY).

Belongs to the HEATR1/UTP10 family. As to quaternary structure, component of the ribosomal small subunit (SSU) processome.

The protein resides in the nucleus. Its subcellular location is the nucleolus. It is found in the membrane. Functionally, involved in nucleolar processing of pre-18S ribosomal RNA. Involved in ribosome biosynthesis. This Debaryomyces hansenii (strain ATCC 36239 / CBS 767 / BCRC 21394 / JCM 1990 / NBRC 0083 / IGC 2968) (Yeast) protein is U3 small nucleolar RNA-associated protein 10.